Reading from the N-terminus, the 350-residue chain is 2,5-dihydroxypyridine 5,6-dioxygenase (350 aa).

3 residues coordinate Fe cation: His265, His318, and Asp320.

Requires Fe(2+) as cofactor.

It carries out the reaction 2,5-dihydroxypyridine + O2 = N-formylmaleamate + H(+). Its pathway is cofactor degradation; nicotinate degradation. Catalyzes the dioxygenolytic ring cleavage of 2,5-dihydroxypyridine between carbons 5 and 6 generating N-formylmaleamate in the aerobic nicotinate degradation pathway. This Pseudomonas putida (strain ATCC 47054 / DSM 6125 / CFBP 8728 / NCIMB 11950 / KT2440) protein is 2,5-dihydroxypyridine 5,6-dioxygenase (nicX).